A 120-amino-acid chain; its full sequence is Cell division protein FtsL (120 aa).

Residues 1 to 22 (MSNVAYKSNLEPNRVHREAEQP) are disordered. Residues 1–37 (MSNVAYKSNLEPNRVHREAEQPKKQILKRGQMTLGEK) lie on the Cytoplasmic side of the membrane. The segment covering 13–22 (NRVHREAEQP) has biased composition (basic and acidic residues). Residues 38–58 (VIITIALAIVLVVAFRIISVQ) traverse the membrane as a helical segment. Over 59 to 120 (AQIYTVNQEI…GDNVKVVDGQ (62 aa)) the chain is Extracellular.

This sequence belongs to the FtsL family.

The protein resides in the cell membrane. Functionally, essential cell division protein. This is Cell division protein FtsL from Listeria monocytogenes serovar 1/2a (strain ATCC BAA-679 / EGD-e).